The sequence spans 388 residues: MKKTKFFLLGLAALAMTACNKDNEAEPVVETNATVSFIIKSGESRAVGDDLTDAKITKLTAMVYAGQVQEGIKTVEEDGGVLKVEGIPCKSGANRVLVVVANHNYELTGKSLNEVEALTTSLTAENQNAKNLIMTGKSAAFTIKPGSNHYGYPGGTASDNLVSAGTPLAVTRVHAGISFAGVEVNMATQYQNYYSFKPADAKIAALVAKKDSKIFGNSLVSNTNAYLYGVQTPAGLYTPDAAGETYELEASLNTNYAVGAGFYVLESKYDASNELRPTILCIYGKLLDKDGNPLTEPALTDAINAGFCDGDGTTYYPVLVNYDGNGYIYSGAITQGQNKIVRNNHYKISLNITGPGTNTPENPQPVQANLNVTCQVTPWVVVNQAATW.

The first 18 residues, 1–18 (MKKTKFFLLGLAALAMTA), serve as a signal peptide directing secretion. Residue C19 is the site of N-palmitoyl cysteine attachment. A lipid anchor (S-diacylglycerol cysteine) is attached at C19. Residues 19–45 (CNKDNEAEPVVETNATVSFIIKSGESR) constitute a propeptide that is removed on maturation. Positions 379–388 (WVVVNQAATW) are important for oligomerization and fimbrium assembly.

Belongs to the bacteroidetes fimbrillin superfamily. FimA/Mfa1 family. As to quaternary structure, fimbriae are composed of a major, structural subunit (FimA) and the minor components FimC, FimD and FimE. Head-to-tail oligomerization of FimA molecules mediates assembly of the fimbrium stalk, while the minor components probably form the fimbrium tip. Linear, head-to-tail oligomerization of FimA is mediated by a conformation change, facilitating the insertion of a C-terminal beta-strand into a groove in the N-terminal domain of the following subunit. The anchoring subunit FimB limits fimbrium length and is important for solid fimbrium attachment to the outer membrane. In its absence, the major fimbriae become very long and are easily detached from the membrane. Post-translationally, synthesized as palmitoylated precursor. Efficient export to the outer membrane and integration into fimbriae requires lipidation and subsequent proteolytic removal of the lipidated propeptide.

The protein resides in the fimbrium. The protein localises to the cell outer membrane. Its function is as follows. Structural subunit of the major fimbriae. These long, filamentous pili are attached to the cell surface; they mediate biofilm formation, adhesion onto host cells and onto other bacteria that are part of the oral microbiome. They play an important role in the invasion of periodontal tissues. Fimbriae and their constituents are major virulence factors. FimA proteins from different strains have highly divergent sequences, and this has been used for classification. The sequence-based classification correlates with pathogenicity. In Porphyromonas gingivalis (strain ATCC BAA-308 / W83), this protein is Major fimbrium subunit FimA type-4 (fimA).